Reading from the N-terminus, the 377-residue chain is Leucine aminopeptidase A (377 aa).

Positions 1 to 18 (MRFLPCIATLAATASALA) are cleaved as a signal peptide. Residues 19 to 79 (IGDHVRSDDQ…SNKKQKLAVT (61 aa)) constitute a propeptide that is removed on maturation. N87 carries an N-linked (GlcNAc...) asparagine glycan. Positions 176, 195, 234, and 261 each coordinate Zn(2+). A glycan (N-linked (GlcNAc...) asparagine) is linked at N288. C310 and C314 are disulfide-bonded. Position 343 (H343) interacts with Zn(2+).

It belongs to the peptidase M28 family. M28E subfamily. As to quaternary structure, monomer. Zn(2+) serves as cofactor.

The protein localises to the secreted. Calcium, magnesium and manganese cations reduce peptidase activity to 20.3-51.3 percent. The metal ion chelating reagent EDTA almost completely inhibits activity. The protease inhibitor bacitracin and the aminopeptidase B inhibitor bestatin, as well as DTT and beta-mercaptoethanol act also as lap A inhibitorsD. Its function is as follows. Extracellular aminopeptidase that allows assimilation of proteinaceous substrates. The sequence is that of Leucine aminopeptidase A (lapA) from Aspergillus oryzae (strain ATCC 42149 / RIB 40) (Yellow koji mold).